Reading from the N-terminus, the 89-residue chain is Large ribosomal subunit protein bL31B (89 aa).

It belongs to the bacterial ribosomal protein bL31 family. Type B subfamily. As to quaternary structure, part of the 50S ribosomal subunit.

The chain is Large ribosomal subunit protein bL31B from Corynebacterium aurimucosum (strain ATCC 700975 / DSM 44827 / CIP 107346 / CN-1) (Corynebacterium nigricans).